The sequence spans 145 residues: Maximins 3/H3 type 1 (145 aa).

An N-terminal signal peptide occupies residues 1–18 (MNFKYIVAVSFLIASAYA). 2 consecutive propeptides follow at residues 19-43 (RSVQNDEQSLSQRDVLEEEESLREI) and 74-124 (RIAE…KEKR). Isoleucine 144 bears the Isoleucine amide mark.

It belongs to the bombinin family. Expressed by the skin glands.

It is found in the secreted. Functionally, maximin-3 shows antibacterial activity against both Gram-positive and Gram-negative bacteria. It also shows antimicrobial activity against the fungus C.albicans, but not against A.flavus nor P.uticale. It has little hemolytic activity. It possess a significant cytotoxicity against tumor cell lines. It possess a significant anti-HIV activity. It shows high spermicidal activity. In terms of biological role, maximin-H3 shows antibacterial activity against both Gram-positive and Gram-negative bacteria. It also shows antimicrobial activity against the fungus C.albicans. Shows strong hemolytic activity. This chain is Maximins 3/H3 type 1, found in Bombina maxima (Giant fire-bellied toad).